A 165-amino-acid chain; its full sequence is Small ribosomal subunit protein eS10 (165 aa).

Residues 92-165 (ATLRRSRPET…FGRGRGQAPQ (74 aa)) are disordered. The segment covering 97-128 (SRPETGRPRPKGLEGERPPRLPRGETDRDTYR) has biased composition (basic and acidic residues). Over residues 142–153 (AGAGAATEFQFR) the composition is skewed to low complexity. Positions 154–165 (GGFGRGRGQAPQ) are enriched in gly residues.

This sequence belongs to the eukaryotic ribosomal protein eS10 family. Component of the small ribosomal subunit.

The protein resides in the cytoplasm. It is found in the nucleus. Its subcellular location is the nucleolus. In terms of biological role, component of the 40S ribosomal subunit. The ribosome is a large ribonucleoprotein complex responsible for the synthesis of proteins in the cell. The sequence is that of Small ribosomal subunit protein eS10 (rps10) from Xenopus laevis (African clawed frog).